The primary structure comprises 434 residues: Enolase (434 aa).

A (2R)-2-phosphoglycerate-binding site is contributed by Gln-168. Glu-210 serves as the catalytic Proton donor. Residues Asp-247, Glu-292, and Asp-319 each contribute to the Mg(2+) site. (2R)-2-phosphoglycerate is bound by residues Lys-344, Arg-373, Ser-374, and Lys-395. Lys-344 (proton acceptor) is an active-site residue.

This sequence belongs to the enolase family. The cofactor is Mg(2+).

The protein resides in the cytoplasm. It localises to the secreted. It is found in the cell surface. The enzyme catalyses (2R)-2-phosphoglycerate = phosphoenolpyruvate + H2O. It participates in carbohydrate degradation; glycolysis; pyruvate from D-glyceraldehyde 3-phosphate: step 4/5. Its function is as follows. Catalyzes the reversible conversion of 2-phosphoglycerate (2-PG) into phosphoenolpyruvate (PEP). It is essential for the degradation of carbohydrates via glycolysis. The polypeptide is Enolase (Endomicrobium trichonymphae).